A 46-amino-acid polypeptide reads, in one-letter code: MQVLNSLRSAKQRHPDCQIVKRKGRLYVICKSNPRFKAVQGRKKRR.

This sequence belongs to the bacterial ribosomal protein bL36 family.

In Enterobacter sp. (strain 638), this protein is Large ribosomal subunit protein bL36B.